Consider the following 302-residue polypeptide: Oxygen-dependent coproporphyrinogen-III oxidase (302 aa).

Ser94 contributes to the substrate binding site. His98 and His108 together coordinate a divalent metal cation. His108 (proton donor) is an active-site residue. Residue 110 to 112 participates in substrate binding; the sequence is NVR. A divalent metal cation contacts are provided by His147 and His177. Residues 242-277 are important for dimerization; the sequence is YVEFNLVYDRGTLFGLQTGGRTESILMSMPPLARWE. Residue 260–262 coordinates substrate; sequence GGR.

The protein belongs to the aerobic coproporphyrinogen-III oxidase family. Homodimer. The cofactor is a divalent metal cation.

The protein resides in the cytoplasm. The catalysed reaction is coproporphyrinogen III + O2 + 2 H(+) = protoporphyrinogen IX + 2 CO2 + 2 H2O. The protein operates within porphyrin-containing compound metabolism; protoporphyrin-IX biosynthesis; protoporphyrinogen-IX from coproporphyrinogen-III (O2 route): step 1/1. Involved in the heme biosynthesis. Catalyzes the aerobic oxidative decarboxylation of propionate groups of rings A and B of coproporphyrinogen-III to yield the vinyl groups in protoporphyrinogen-IX. The chain is Oxygen-dependent coproporphyrinogen-III oxidase from Aeromonas hydrophila subsp. hydrophila (strain ATCC 7966 / DSM 30187 / BCRC 13018 / CCUG 14551 / JCM 1027 / KCTC 2358 / NCIMB 9240 / NCTC 8049).